The chain runs to 275 residues: Bis(5'-nucleosyl)-tetraphosphatase, symmetrical (275 aa).

Belongs to the Ap4A hydrolase family.

The enzyme catalyses P(1),P(4)-bis(5'-adenosyl) tetraphosphate + H2O = 2 ADP + 2 H(+). Its function is as follows. Hydrolyzes diadenosine 5',5'''-P1,P4-tetraphosphate to yield ADP. The sequence is that of Bis(5'-nucleosyl)-tetraphosphatase, symmetrical (apaH) from Pasteurella multocida (strain Pm70).